Here is a 354-residue protein sequence, read N- to C-terminus: Elongation factor Ts (354 aa).

The involved in Mg(2+) ion dislocation from EF-Tu stretch occupies residues 81–84 (TDFV).

Belongs to the EF-Ts family.

Its subcellular location is the cytoplasm. In terms of biological role, associates with the EF-Tu.GDP complex and induces the exchange of GDP to GTP. It remains bound to the aminoacyl-tRNA.EF-Tu.GTP complex up to the GTP hydrolysis stage on the ribosome. The chain is Elongation factor Ts from Campylobacter fetus subsp. fetus (strain 82-40).